Here is a 209-residue protein sequence, read N- to C-terminus: ATP-dependent Clp protease proteolytic subunit (209 aa).

Ser-113 acts as the Nucleophile in catalysis. His-138 is a catalytic residue.

It belongs to the peptidase S14 family. As to quaternary structure, fourteen ClpP subunits assemble into 2 heptameric rings which stack back to back to give a disk-like structure with a central cavity, resembling the structure of eukaryotic proteasomes.

The protein resides in the cytoplasm. It catalyses the reaction Hydrolysis of proteins to small peptides in the presence of ATP and magnesium. alpha-casein is the usual test substrate. In the absence of ATP, only oligopeptides shorter than five residues are hydrolyzed (such as succinyl-Leu-Tyr-|-NHMec, and Leu-Tyr-Leu-|-Tyr-Trp, in which cleavage of the -Tyr-|-Leu- and -Tyr-|-Trp bonds also occurs).. Its function is as follows. Cleaves peptides in various proteins in a process that requires ATP hydrolysis. Has a chymotrypsin-like activity. Plays a major role in the degradation of misfolded proteins. The chain is ATP-dependent Clp protease proteolytic subunit from Blochmanniella floridana.